The sequence spans 280 residues: Probable ketoamine kinase lp_1983 (280 aa).

87–89 (DWL) provides a ligand contact to ATP. The active-site Proton acceptor is the Asp189.

The protein belongs to the fructosamine kinase family.

It catalyses the reaction N(6)-(D-ribulosyl)-L-lysine + ATP = N(6)-(3-O-phospho-D-ribulosyl)-L-lysine + ADP + H(+). It carries out the reaction N-(D-ribulosyl)-cadaverine + ATP = N-(3-O-phospho-D-ribulosyl)-cadaverine + ADP + H(+). The catalysed reaction is N(6)-(D-erythrulosyl)-L-lysine + ATP = N(6)-(3-O-phospho-D-erythrulosyl)-L-lysine + ADP + H(+). The enzyme catalyses N-(D-erythrulosyl)-cadaverine + ATP = N-(3-O-phospho-D-erythrulosyl)-cadaverine + ADP + H(+). It catalyses the reaction N(6)-D-ribulosyl-L-lysyl-[protein] + ATP = N(6)-(3-O-phospho-D-ribulosyl)-L-lysyl-[protein] + ADP + H(+). It carries out the reaction N(6)-(D-erythrulosyl)-L-lysyl-[protein] + ATP = N(6)-(3-O-phospho-D-erythrulosyl)-L-lysyl-[protein] + ADP + H(+). In terms of biological role, ketoamine kinase that phosphorylates ketoamines, such as erythruloselysine, erythrulosecadaverine, ribuloselysine and ribulosecadaverine, on the third carbon of the sugar moiety to generate ketoamine 3-phosphate. Has higher activity on free lysine (erythruloselysine and ribuloselysine), than on ribuloselysine and erythruloselysine residues on glycated proteins. The protein is Probable ketoamine kinase lp_1983 of Lactiplantibacillus plantarum (strain ATCC BAA-793 / NCIMB 8826 / WCFS1) (Lactobacillus plantarum).